Reading from the N-terminus, the 683-residue chain is Phosphomethylpyrimidine synthase (683 aa).

Substrate-binding positions include Asn235, Met264, Tyr293, His329, 349-351 (SRG), 390-393 (DGMR), and Glu429. Position 433 (His433) interacts with Zn(2+). Tyr456 is a substrate binding site. Residue His497 participates in Zn(2+) binding. [4Fe-4S] cluster is bound by residues Cys577, Cys580, and Cys585. The tract at residues 647–683 (RQSPGVESTSLESTSLESTVLESTSLESTALEKAKEV) is disordered. The span at 653-675 (ESTSLESTSLESTVLESTSLEST) shows a compositional bias: low complexity.

Belongs to the ThiC family. In terms of assembly, homodimer. The cofactor is [4Fe-4S] cluster.

The enzyme catalyses 5-amino-1-(5-phospho-beta-D-ribosyl)imidazole + S-adenosyl-L-methionine = 4-amino-2-methyl-5-(phosphooxymethyl)pyrimidine + CO + 5'-deoxyadenosine + formate + L-methionine + 3 H(+). It participates in cofactor biosynthesis; thiamine diphosphate biosynthesis. Catalyzes the synthesis of the hydroxymethylpyrimidine phosphate (HMP-P) moiety of thiamine from aminoimidazole ribotide (AIR) in a radical S-adenosyl-L-methionine (SAM)-dependent reaction. The protein is Phosphomethylpyrimidine synthase of Shewanella loihica (strain ATCC BAA-1088 / PV-4).